A 425-amino-acid chain; its full sequence is Enolase (425 aa).

Gln-163 is a (2R)-2-phosphoglycerate binding site. The active-site Proton donor is the Glu-205. 3 residues coordinate Mg(2+): Asp-242, Glu-285, and Asp-312. Residues Lys-337, Arg-366, Ser-367, and Lys-388 each coordinate (2R)-2-phosphoglycerate. The active-site Proton acceptor is Lys-337.

The protein belongs to the enolase family. It depends on Mg(2+) as a cofactor.

Its subcellular location is the cytoplasm. The protein localises to the secreted. It localises to the cell surface. It catalyses the reaction (2R)-2-phosphoglycerate = phosphoenolpyruvate + H2O. The protein operates within carbohydrate degradation; glycolysis; pyruvate from D-glyceraldehyde 3-phosphate: step 4/5. Functionally, catalyzes the reversible conversion of 2-phosphoglycerate (2-PG) into phosphoenolpyruvate (PEP). It is essential for the degradation of carbohydrates via glycolysis. This chain is Enolase, found in Ruegeria sp. (strain TM1040) (Silicibacter sp.).